The sequence spans 512 residues: PTS system mannitol-specific EIICB component (512 aa).

At 1-28 (MSQTEEKKGIGRRVQAFGSFLSSMIMPN) the chain is on the cytoplasmic side. The PTS EIIC type-2 domain occupies 17–349 (FGSFLSSMIM…MKFTREPKQD (333 aa)). A helical transmembrane segment spans residues 29–50 (IGAFIAWGFIAAIFIDNGWLPN). Residues 51–54 (KDLA) are Extracellular-facing. The helical transmembrane segment at 55–75 (TLAGPMITYLIPLLIAFSGGR) threads the bilayer. Residues 76–139 (LIYDLRGGII…QGFEMLFNNF (64 aa)) are Cytoplasmic-facing. A helical transmembrane segment spans residues 140-161 (SAGILGFIMTIAGFKILAPLMK). The Extracellular segment spans residues 162-170 (FIMHILSVA). The helical transmembrane segment at 171-191 (VEALVHAHLLPLVSILVEPAK) threads the bilayer. Over 192–278 (IVFLNNAINH…VLMRPLLFIA (87 aa)) the chain is Cytoplasmic. Residues 279–298 (VILGGMTGVATYQATGFGFK) traverse the membrane as a helical segment. Topologically, residues 299-318 (SPASPGSFIVYCLNAPRGEF) are extracellular. A helical transmembrane segment spans residues 319-340 (LHMLLGVFLAALVSFVVAALIM). The Cytoplasmic portion of the chain corresponds to 341–512 (KFTREPKQDL…LNNLKKDDQA (172 aa)). Residues 355 to 402 (AQMENTKGKKSSVASKLVSSDKNVNTEENASGNVSETSSSDDDPEALL) are disordered. The segment covering 365 to 376 (SSVASKLVSSDK) has biased composition (low complexity). The segment covering 380–392 (TEENASGNVSETS) has biased composition (polar residues). A PTS EIIB type-2 domain is found at 419-512 (NHVIFACDAG…LNNLKKDDQA (94 aa)). Cysteine 425 acts as the Phosphocysteine intermediate; for EIIB activity in catalysis. Cysteine 425 is subject to Phosphocysteine; by EIIA.

As to quaternary structure, homodimer.

It is found in the cell membrane. The catalysed reaction is D-mannitol(out) + N(pros)-phospho-L-histidyl-[protein] = D-mannitol 1-phosphate(in) + L-histidyl-[protein]. Functionally, the phosphoenolpyruvate-dependent sugar phosphotransferase system (sugar PTS), a major carbohydrate active transport system, catalyzes the phosphorylation of incoming sugar substrates concomitantly with their translocation across the cell membrane. The enzyme II CmtAB PTS system is involved in D-mannitol transport. This is PTS system mannitol-specific EIICB component (mtlA) from Staphylococcus aureus (strain Mu50 / ATCC 700699).